A 395-amino-acid chain; its full sequence is MAKENFDRSKPHVNVGTIGHVDHGKTTLTAAITKVLADKGLAEKRDFSQIDNAPEEKERGITINTSHVEYATATRHYAHVDCPGHADYVKNMVTGAAQMDGAILVVAATDGPMPQTREHILLARQVGVPAMVVFMNKVDLVDDPELLELVEMEIRELLSFYNFPGDTMSIIKGSALGGLNADPKWVATIEELMNAVDNDIPIPPRLTDQPFLMPVEDVFSITGRGTVATGRIERGVINSGEGVDIIGFGAENLKSTVTGVEMFRKILDRGEAGDNVGLLLRGIEKESIKRGMVICKPGSVKPHSEFKGEIYVLSKEEGGRHTPFFNKYRPQFYMRTTDVTGEIELPAGTEMVMPGDNITITVKLIAAIALEKGLRFAIREGGRTVGAGQVTEILK.

The region spanning 10–205 (KPHVNVGTIG…VDNDIPIPPR (196 aa)) is the tr-type G domain. Residues 19-26 (GHVDHGKT) are G1. 19–26 (GHVDHGKT) is a binding site for GTP. Residue T26 participates in Mg(2+) binding. Residues 60 to 64 (GITIN) form a G2 region. The G3 stretch occupies residues 81-84 (DCPG). Residues 81 to 85 (DCPGH) and 136 to 139 (NKVD) each bind GTP. A G4 region spans residues 136–139 (NKVD). Residues 174 to 176 (SAL) are G5.

This sequence belongs to the TRAFAC class translation factor GTPase superfamily. Classic translation factor GTPase family. EF-Tu/EF-1A subfamily. Monomer.

It is found in the cytoplasm. It carries out the reaction GTP + H2O = GDP + phosphate + H(+). GTP hydrolase that promotes the GTP-dependent binding of aminoacyl-tRNA to the A-site of ribosomes during protein biosynthesis. The chain is Elongation factor Tu from Cytophaga hutchinsonii (strain ATCC 33406 / DSM 1761 / CIP 103989 / NBRC 15051 / NCIMB 9469 / D465).